A 534-amino-acid polypeptide reads, in one-letter code: MSEVANEASRRRTFAIISHPDAGKTTLTEKLLLFGGAIQMAGSVKGRKAARHATSDWMALEKERGISVTSSVMQFPYEGKIVNLLDTPGHADFGEDTYRVLTAVDSALMVIDVAKGVEERTIKLMEVCRLRDTPIMTFINKLDREGKDPIELLDEVETVLGIQCAPVTWPIGMGQRLKGVVHLLTGEVHLYEPGRNFTRQDSTIFPSIDAPGLAEKIGAQMLAELRDELDLVQGASHPFDLDAYRAGKQTPVFFGSGVNNFGVQPLLDFFVEHAPPPQARTTTGRVIAPEENKLTGFVFKIQANMDPQHRDRVAFMRICSGRFSAGMKTFHVRTGKDMKLANALTFMASDREIAAEAWPGDVIGIHNHGTISIGDTFTEGEAVTFTGIPNFAPELFRRARLRDPLKLKQLQKGLAQLSEEGATQFFRPLTSNDLILGAVGVLQFDVAAYRLKDEYGVEATFEQVSVSTARWVHCSNEKKLEEFREKNALNLALDAAGHLVYLAPTRVNLQLAQERSPDVRFSATREAAHTVSVG.

The tr-type G domain occupies Ser-9 to Gln-278. GTP contacts are provided by residues Ser-18–Thr-25, Asp-86–His-90, and Asn-140–Asp-143.

This sequence belongs to the TRAFAC class translation factor GTPase superfamily. Classic translation factor GTPase family. PrfC subfamily.

It localises to the cytoplasm. Functionally, increases the formation of ribosomal termination complexes and stimulates activities of RF-1 and RF-2. It binds guanine nucleotides and has strong preference for UGA stop codons. It may interact directly with the ribosome. The stimulation of RF-1 and RF-2 is significantly reduced by GTP and GDP, but not by GMP. This Stenotrophomonas maltophilia (strain R551-3) protein is Peptide chain release factor 3.